We begin with the raw amino-acid sequence, 371 residues long: Aminomethyltransferase (371 aa).

Belongs to the GcvT family. As to quaternary structure, the glycine cleavage system is composed of four proteins: P, T, L and H.

It carries out the reaction N(6)-[(R)-S(8)-aminomethyldihydrolipoyl]-L-lysyl-[protein] + (6S)-5,6,7,8-tetrahydrofolate = N(6)-[(R)-dihydrolipoyl]-L-lysyl-[protein] + (6R)-5,10-methylene-5,6,7,8-tetrahydrofolate + NH4(+). Functionally, the glycine cleavage system catalyzes the degradation of glycine. The protein is Aminomethyltransferase of Leptospira interrogans serogroup Icterohaemorrhagiae serovar Lai (strain 56601).